We begin with the raw amino-acid sequence, 387 residues long: Thermostable celloxylanase (387 aa).

A GH10 domain is found at 41 to 382 (AEDIPSLAEA…KPAFWAIVDP (342 aa)). The active-site Proton donor is the Glu185. Glu293 acts as the Nucleophile in catalysis.

The protein belongs to the glycosyl hydrolase 10 (cellulase F) family.

It catalyses the reaction Endohydrolysis of (1-&gt;4)-beta-D-glucosidic linkages in cellulose, lichenin and cereal beta-D-glucans.. The enzyme catalyses Endohydrolysis of (1-&gt;4)-beta-D-xylosidic linkages in xylans.. Its pathway is glycan degradation; xylan degradation. Active toward xylan, carboxymethylcellulose, P-nitrophenyl-beta-D-xylopyranoside and P-nitrophenyl-beta-D-cellobioside. The protein is Thermostable celloxylanase (xynB) of Thermoclostridium stercorarium (Clostridium stercorarium).